Consider the following 230-residue polypeptide: Ribosomal RNA small subunit methyltransferase G (230 aa).

Residues G91, L96, 142 to 143 (VE), and R161 contribute to the S-adenosyl-L-methionine site.

This sequence belongs to the methyltransferase superfamily. RNA methyltransferase RsmG family.

Its subcellular location is the cytoplasm. It catalyses the reaction guanosine(527) in 16S rRNA + S-adenosyl-L-methionine = N(7)-methylguanosine(527) in 16S rRNA + S-adenosyl-L-homocysteine. Functionally, specifically methylates the N7 position of guanine in position 527 of 16S rRNA. In Burkholderia pseudomallei (strain K96243), this protein is Ribosomal RNA small subunit methyltransferase G.